The following is a 403-amino-acid chain: Serine/threonine transporter SstT (403 aa).

A run of 10 helical transmembrane segments spans residues leucine 15–tryptophan 35, phenylalanine 49–isoleucine 69, leucine 85–phenylalanine 105, alanine 142–leucine 162, isoleucine 183–leucine 203, leucine 218–phenylalanine 238, tyrosine 246–alanine 268, isoleucine 289–isoleucine 309, leucine 317–alanine 337, and proline 362–threonine 382.

It belongs to the dicarboxylate/amino acid:cation symporter (DAACS) (TC 2.A.23) family.

The protein resides in the cell inner membrane. The catalysed reaction is L-serine(in) + Na(+)(in) = L-serine(out) + Na(+)(out). It carries out the reaction L-threonine(in) + Na(+)(in) = L-threonine(out) + Na(+)(out). Involved in the import of serine and threonine into the cell, with the concomitant import of sodium (symport system). The polypeptide is Serine/threonine transporter SstT (Chromohalobacter salexigens (strain ATCC BAA-138 / DSM 3043 / CIP 106854 / NCIMB 13768 / 1H11)).